Here is a 422-residue protein sequence, read N- to C-terminus: Dihydrolipoyllysine-residue succinyltransferase component of 2-oxoglutarate dehydrogenase complex (422 aa).

The 76-residue stretch at 1–76 (MPEVKVPELA…EVGQAIAVIG (76 aa)) folds into the Lipoyl-binding domain. Position 42 is an N6-lipoyllysine (lysine 42). Positions 77–184 (EGSGNASKEN…APAKEEKKYN (108 aa)) are disordered. Composition is skewed to polar residues over residues 80-94 (GNAS…TPQQ) and 114-130 (EVNQ…NATP). One can recognise a Peripheral subunit-binding (PSBD) domain in the interval 127 to 163 (NATPSARRYARENGVNLAEVSPKTNDVVRKEDIDKKQ). Over residues 152 to 163 (DVVRKEDIDKKQ) the composition is skewed to basic and acidic residues. Residues 164 to 176 (QAPASTQTTQQAP) show a composition bias toward low complexity. Residues histidine 393 and aspartate 397 contribute to the active site.

The protein belongs to the 2-oxoacid dehydrogenase family. Forms a 24-polypeptide structural core with octahedral symmetry. Part of the 2-oxoglutarate dehydrogenase (OGDH) complex composed of E1 (2-oxoglutarate dehydrogenase), E2 (dihydrolipoamide succinyltransferase) and E3 (dihydrolipoamide dehydrogenase); the complex contains multiple copies of the three enzymatic components (E1, E2 and E3). (R)-lipoate is required as a cofactor.

It carries out the reaction N(6)-[(R)-dihydrolipoyl]-L-lysyl-[protein] + succinyl-CoA = N(6)-[(R)-S(8)-succinyldihydrolipoyl]-L-lysyl-[protein] + CoA. The protein operates within amino-acid degradation; L-lysine degradation via saccharopine pathway; glutaryl-CoA from L-lysine: step 6/6. In terms of biological role, E2 component of the 2-oxoglutarate dehydrogenase (OGDH) complex which catalyzes the second step in the conversion of 2-oxoglutarate to succinyl-CoA and CO(2). This Staphylococcus aureus (strain bovine RF122 / ET3-1) protein is Dihydrolipoyllysine-residue succinyltransferase component of 2-oxoglutarate dehydrogenase complex (odhB).